The sequence spans 374 residues: Protein RecA (374 aa).

Residue Gly66–Thr73 participates in ATP binding. Residues Leu327–Ser374 form a disordered region. Positions Thr338–Ser374 are enriched in low complexity.

This sequence belongs to the RecA family.

Its subcellular location is the cytoplasm. Can catalyze the hydrolysis of ATP in the presence of single-stranded DNA, the ATP-dependent uptake of single-stranded DNA by duplex DNA, and the ATP-dependent hybridization of homologous single-stranded DNAs. It interacts with LexA causing its activation and leading to its autocatalytic cleavage. The sequence is that of Protein RecA from Streptomyces lividans.